Consider the following 174-residue polypeptide: RNA pyrophosphohydrolase (174 aa).

The 144-residue stretch at 6–149 folds into the Nudix hydrolase domain; the sequence is GYRPNVGIIL…KRDVYLEALK (144 aa). Residues 38 to 59 carry the Nudix box motif; that stretch reads GGIKPGESPETAMYRELYEEVG.

The protein belongs to the Nudix hydrolase family. RppH subfamily. Requires a divalent metal cation as cofactor.

Its function is as follows. Accelerates the degradation of transcripts by removing pyrophosphate from the 5'-end of triphosphorylated RNA, leading to a more labile monophosphorylated state that can stimulate subsequent ribonuclease cleavage. The polypeptide is RNA pyrophosphohydrolase (Neisseria gonorrhoeae (strain ATCC 700825 / FA 1090)).